Reading from the N-terminus, the 64-residue chain is Translation machinery-associated protein 7 homolog (64 aa).

The disordered stretch occupies residues 1 to 64 (MTGREGGKKK…TGGIKKSGKK (64 aa)). The stretch at 21–50 (EMDEEDMAFKQKQKEQQKAMEAAKQKAAKG) forms a coiled coil. Basic and acidic residues predominate over residues 27–44 (MAFKQKQKEQQKAMEAAK).

This sequence belongs to the TMA7 family.

The polypeptide is Translation machinery-associated protein 7 homolog (Aedes aegypti (Yellowfever mosquito)).